A 92-amino-acid chain; its full sequence is Small ribosomal subunit protein uS19c (92 aa).

This sequence belongs to the universal ribosomal protein uS19 family.

It localises to the plastid. Its subcellular location is the chloroplast. Functionally, protein S19 forms a complex with S13 that binds strongly to the 16S ribosomal RNA. The protein is Small ribosomal subunit protein uS19c of Pyropia yezoensis (Susabi-nori).